A 264-amino-acid chain; its full sequence is Agamous-like MADS-box protein AGL61 (264 aa).

In terms of domain architecture, MADS-box spans 62–122; the sequence is IGRQKIPMVK…KKPFSFGHPS (61 aa).

Interacts with PHE1/AGL37, PHE2/AGL38, AGL80 and AGL86. Forms a heterodimer with AGL80. As to expression, expressed exclusively in the central cell of the female gametophyte and in early endosperm.

It localises to the nucleus. Probable transcription factor. Controls central cell differentiation during female gametophyte development. The sequence is that of Agamous-like MADS-box protein AGL61 (AGL61) from Arabidopsis thaliana (Mouse-ear cress).